Consider the following 618-residue polypeptide: DNA mismatch repair protein MutL (618 aa).

The segment covering 367-381 (EPTAAREPATPRYSG) has biased composition (low complexity). Positions 367–402 (EPTAAREPATPRYSGGASGGNGGRQSAGGWPHAQPG) are disordered. The span at 382 to 392 (GASGGNGGRQS) shows a compositional bias: gly residues.

The protein belongs to the DNA mismatch repair MutL/HexB family.

This protein is involved in the repair of mismatches in DNA. It is required for dam-dependent methyl-directed DNA mismatch repair. May act as a 'molecular matchmaker', a protein that promotes the formation of a stable complex between two or more DNA-binding proteins in an ATP-dependent manner without itself being part of a final effector complex. The polypeptide is DNA mismatch repair protein MutL (Salmonella gallinarum (strain 287/91 / NCTC 13346)).